The following is a 211-amino-acid chain: ATP-dependent Clp protease proteolytic subunit (211 aa).

Catalysis depends on serine 106, which acts as the Nucleophile. Histidine 131 is a catalytic residue.

This sequence belongs to the peptidase S14 family. As to quaternary structure, fourteen ClpP subunits assemble into 2 heptameric rings which stack back to back to give a disk-like structure with a central cavity, resembling the structure of eukaryotic proteasomes.

It localises to the cytoplasm. The catalysed reaction is Hydrolysis of proteins to small peptides in the presence of ATP and magnesium. alpha-casein is the usual test substrate. In the absence of ATP, only oligopeptides shorter than five residues are hydrolyzed (such as succinyl-Leu-Tyr-|-NHMec, and Leu-Tyr-Leu-|-Tyr-Trp, in which cleavage of the -Tyr-|-Leu- and -Tyr-|-Trp bonds also occurs).. Functionally, cleaves peptides in various proteins in a process that requires ATP hydrolysis. Has a chymotrypsin-like activity. Plays a major role in the degradation of misfolded proteins. The chain is ATP-dependent Clp protease proteolytic subunit from Maricaulis maris (strain MCS10) (Caulobacter maris).